The primary structure comprises 274 residues: Ribosomal RNA small subunit methyltransferase A (274 aa).

Asn-20, Leu-22, Gly-47, Glu-68, Asp-90, and Asn-110 together coordinate S-adenosyl-L-methionine.

Belongs to the class I-like SAM-binding methyltransferase superfamily. rRNA adenine N(6)-methyltransferase family. RsmA subfamily.

The protein resides in the cytoplasm. The enzyme catalyses adenosine(1518)/adenosine(1519) in 16S rRNA + 4 S-adenosyl-L-methionine = N(6)-dimethyladenosine(1518)/N(6)-dimethyladenosine(1519) in 16S rRNA + 4 S-adenosyl-L-homocysteine + 4 H(+). Its function is as follows. Specifically dimethylates two adjacent adenosines (A1518 and A1519) in the loop of a conserved hairpin near the 3'-end of 16S rRNA in the 30S particle. May play a critical role in biogenesis of 30S subunits. This Chlorobaculum parvum (strain DSM 263 / NCIMB 8327) (Chlorobium vibrioforme subsp. thiosulfatophilum) protein is Ribosomal RNA small subunit methyltransferase A.